Reading from the N-terminus, the 778-residue chain is pH-response regulator protein palH/prr-4 (778 aa).

Topologically, residues 1 to 108 (MEPRQLFSDP…DPFYASTFPQ (108 aa)) are extracellular. The chain crosses the membrane as a helical span at residues 109 to 129 (CYALAATTIIAYTLVIMLFIT). Residues 130–160 (PRSFLDGGVVVLGRKGFTNGGGGTSIGGRPW) lie on the Periplasmic side of the membrane. The helical transmembrane segment at 161–181 (LQKVAALSVAISLTIANAATF) threads the bilayer. Over 182 to 201 (RAAEQQYSWGVQNAKQLQED) the chain is Extracellular. The helical transmembrane segment at 202 to 222 (VLGGAELKIIRIISDTFLWLA) threads the bilayer. Residues 223–237 (QAQTLIRLFPRQREK) lie on the Periplasmic side of the membrane. Residues 238 to 258 (VIIKWTAFALITLDVIFQSLN) traverse the membrane as a helical segment. The Extracellular segment spans residues 259-275 (SFKYGGSDLTRPKFTEA). The helical transmembrane segment at 276-296 (VPALSYLFALALGVLYAAWVL) threads the bilayer. The Periplasmic segment spans residues 297–314 (YYSIMKKRYAFYHPLMKN). The chain crosses the membrane as a helical span at residues 315–335 (MILVAVLSVVSILVPVVFFIL). The Extracellular segment spans residues 336-341 (DISKPD). Residues 342–362 (FAGWGDYVRWVGAAAASVIVW) form a helical membrane-spanning segment. Residues 363 to 778 (EWVERIEALE…RSDSSTTPSP (416 aa)) lie on the Periplasmic side of the membrane. Disordered stretches follow at residues 394–499 (ASQS…DTTS), 514–605 (ELTS…DENS), and 660–778 (ELNH…TPSP). Basic and acidic residues predominate over residues 446–456 (HRTEPSSRNEP). The segment covering 457 to 466 (NEGSSPVAET) has biased composition (polar residues). Composition is skewed to basic and acidic residues over residues 588 to 605 (FVTRSEPRSSKMQRDENS) and 661 to 675 (LNHSSREGTVREESR). The segment covering 720 to 732 (PIVTQGSFTNNRY) has biased composition (polar residues). Low complexity predominate over residues 749–759 (ARAPSQPQSPS). The segment covering 769 to 778 (RSDSSTTPSP) has biased composition (polar residues).

It belongs to the palH/RIM21 family.

The protein localises to the cell membrane. Required for the proteolytic cleavage of the transcription factor pacc-1 in response to alkaline ambient pH. In Neurospora crassa (strain ATCC 24698 / 74-OR23-1A / CBS 708.71 / DSM 1257 / FGSC 987), this protein is pH-response regulator protein palH/prr-4 (prr-4).